We begin with the raw amino-acid sequence, 200 residues long: Mediator of RNA polymerase II transcription subunit 8 (200 aa).

This sequence belongs to the Mediator complex subunit 8 family. Component of the Mediator complex.

The protein localises to the nucleus. Functionally, component of the Mediator complex, a coactivator involved in the regulated transcription of nearly all RNA polymerase II-dependent genes. Mediator functions as a bridge to convey information from gene-specific regulatory proteins to the basal RNA polymerase II transcription machinery. Mediator is recruited to promoters by direct interactions with regulatory proteins and serves as a scaffold for the assembly of a functional preinitiation complex with RNA polymerase II and the general transcription factors. The protein is Mediator of RNA polymerase II transcription subunit 8 (med8) of Schizosaccharomyces pombe (strain 972 / ATCC 24843) (Fission yeast).